Here is a 143-residue protein sequence, read N- to C-terminus: 18.1 kDa class I heat shock protein (143 aa).

Residues 29-143 enclose the sHSP domain; it reads ENSAFVSTRI…PEVKSIEISS (115 aa).

It belongs to the small heat shock protein (HSP20) family. As to quaternary structure, forms oligomeric structures.

It localises to the cytoplasm. The chain is 18.1 kDa class I heat shock protein (HSP18.1) from Medicago sativa (Alfalfa).